Reading from the N-terminus, the 545-residue chain is CTP synthase (545 aa).

The segment at 1–266 (MTTNYIFVTG…DDYICKRFSL (266 aa)) is amidoligase domain. Ser-14 contributes to the CTP binding site. Residue Ser-14 participates in UTP binding. ATP contacts are provided by residues 15–20 (SLGKGI) and Asp-72. Asp-72 and Glu-140 together coordinate Mg(2+). CTP is bound by residues 147–149 (DIE), 187–192 (KTKPTQ), and Lys-223. Residues 187–192 (KTKPTQ) and Lys-223 contribute to the UTP site. Position 239 to 241 (239 to 241 (KDV)) interacts with ATP. Positions 291–542 (TIGMVGKYIE…VKAASEYQKR (252 aa)) constitute a Glutamine amidotransferase type-1 domain. Gly-352 contacts L-glutamine. Catalysis depends on Cys-379, which acts as the Nucleophile; for glutamine hydrolysis. L-glutamine contacts are provided by residues 380-383 (LGMQ), Glu-403, and Arg-470. Active-site residues include His-515 and Glu-517.

It belongs to the CTP synthase family. Homotetramer.

The catalysed reaction is UTP + L-glutamine + ATP + H2O = CTP + L-glutamate + ADP + phosphate + 2 H(+). It carries out the reaction L-glutamine + H2O = L-glutamate + NH4(+). The enzyme catalyses UTP + NH4(+) + ATP = CTP + ADP + phosphate + 2 H(+). It functions in the pathway pyrimidine metabolism; CTP biosynthesis via de novo pathway; CTP from UDP: step 2/2. With respect to regulation, allosterically activated by GTP, when glutamine is the substrate; GTP has no effect on the reaction when ammonia is the substrate. The allosteric effector GTP functions by stabilizing the protein conformation that binds the tetrahedral intermediate(s) formed during glutamine hydrolysis. Inhibited by the product CTP, via allosteric rather than competitive inhibition. Its function is as follows. Catalyzes the ATP-dependent amination of UTP to CTP with either L-glutamine or ammonia as the source of nitrogen. Regulates intracellular CTP levels through interactions with the four ribonucleotide triphosphates. The chain is CTP synthase from Enterobacter sp. (strain 638).